A 117-amino-acid polypeptide reads, in one-letter code: Gamma-aminobutyric acid receptor-associated protein-like 1 (117 aa).

Gly-116 carries Phosphatidylethanolamine amidated glycine; alternate lipidation. Residue Gly-116 is the site of Phosphatidylserine amidated glycine; alternate attachment. Lys-117 is a propeptide (removed in mature form).

This sequence belongs to the ATG8 family. As to quaternary structure, interacts with ATG13, OPRK1, RB1CC1 and ULK1. Interacts with TP53INP1 and TP53INP2. Directly interacts with SQSTM1. Interacts with ATG3, ATG7 and MAP15. Interacts with TECPR2. Interacts with TBC1D5. Interacts with MAPK15. Interacts with TRIM5. Interacts with MEFV and TRIM21. Interacts with WDFY3. Interacts with the reticulophagy receptor TEX264. Interacts with UBA5. Interacts with KBTBD6 and KBTBD7; the interaction is direct. Interacts with reticulophagy regulators RETREG1, RETREG2 and RETREG3. Interacts with IRGM. Interacts with DNM2. Interacts with NCOA4 (via C-terminus). Post-translationally, the precursor molecule is cleaved by ATG4 (ATG4A, ATG4B, ATG4C or ATG4D) to expose the glycine at the C-terminus and form the cytosolic form, GABARAPL1-I. The processed form is then activated by APG7L/ATG7, transferred to ATG3 and conjugated to phosphatidylethanolamine (PE) phospholipid to form the membrane-bound form, GABARAPL1-II. During non-canonical autophagy, the processed form is conjugated to phosphatidylserine (PS) phospholipid. ATG4 proteins also mediate the delipidation of PE-conjugated forms required for GABARAPL1 recycling when autophagosomes fuse with lysosomes. In addition, ATG4B and ATG4D mediate delipidation of ATG8 proteins conjugated to PS during non-canonical autophagy. ATG4B constitutes the major protein for proteolytic activation. ATG4D is the main enzyme for delipidation activity.

It localises to the cytoplasmic vesicle. The protein resides in the autophagosome. Its subcellular location is the cytoplasmic vesicle membrane. It is found in the cytoplasm. The protein localises to the cytoskeleton. It localises to the endoplasmic reticulum. The protein resides in the golgi apparatus. Its function is as follows. Ubiquitin-like modifier that increases cell-surface expression of kappa-type opioid receptor through facilitating anterograde intracellular trafficking of the receptor. Involved in formation of autophagosomal vacuoles. While LC3s are involved in elongation of the phagophore membrane, the GABARAP/GATE-16 subfamily is essential for a later stage in autophagosome maturation. Through its interaction with the reticulophagy receptor TEX264, participates in the remodeling of subdomains of the endoplasmic reticulum into autophagosomes upon nutrient stress, which then fuse with lysosomes for endoplasmic reticulum turnover. The chain is Gamma-aminobutyric acid receptor-associated protein-like 1 from Bos taurus (Bovine).